The sequence spans 520 residues: GMP synthase [glutamine-hydrolyzing] (520 aa).

Residues 9–202 form the Glutamine amidotransferase type-1 domain; sequence KILILDFGSQ…VRAICGCTGH (194 aa). The active-site Nucleophile is cysteine 86. Active-site residues include histidine 176 and glutamate 178. Positions 203–395 constitute a GMPS ATP-PPase domain; that stretch reads WTPGQIIEDA…LGLPHQMVWR (193 aa). 230–236 lines the ATP pocket; it reads SGGVDSS.

In terms of assembly, homodimer.

It catalyses the reaction XMP + L-glutamine + ATP + H2O = GMP + L-glutamate + AMP + diphosphate + 2 H(+). It participates in purine metabolism; GMP biosynthesis; GMP from XMP (L-Gln route): step 1/1. Functionally, catalyzes the synthesis of GMP from XMP. This is GMP synthase [glutamine-hydrolyzing] from Pelobacter propionicus (strain DSM 2379 / NBRC 103807 / OttBd1).